A 244-amino-acid chain; its full sequence is 5'-nucleotidase SurE 2 (244 aa).

A divalent metal cation is bound by residues aspartate 8, aspartate 9, serine 39, and asparagine 96.

It belongs to the SurE nucleotidase family. It depends on a divalent metal cation as a cofactor.

It is found in the cytoplasm. The catalysed reaction is a ribonucleoside 5'-phosphate + H2O = a ribonucleoside + phosphate. In terms of biological role, nucleotidase that shows phosphatase activity on nucleoside 5'-monophosphates. This chain is 5'-nucleotidase SurE 2, found in Thermus thermophilus (strain ATCC BAA-163 / DSM 7039 / HB27).